A 278-amino-acid polypeptide reads, in one-letter code: ATPase SWSAP1 (278 aa).

Positions 237 to 278 are disordered; sequence SPEKKDSSAGSQSLTLGCDNLPGPGSPLDGILTSETGADSKT. Residues 269-278 show a composition bias toward polar residues; it reads TSETGADSKT.

In terms of assembly, interacts with ZSWIM7; they form a functional complex involved in homologous recombination repair and stabilize each other. Interacts with RAD51, RAD51B, RAD51C, RAD51D and XRCC3; involved in homologous recombination repair.

The protein localises to the nucleus. In terms of biological role, ATPase which is preferentially stimulated by single-stranded DNA and is involved in homologous recombination repair (HRR). Has a DNA-binding activity which is independent of its ATPase activity. The protein is ATPase SWSAP1 (Swsap1) of Mus musculus (Mouse).